Here is a 139-residue protein sequence, read N- to C-terminus: Ribonuclease VapC39 (139 aa).

The PINc domain maps to 4–133; sequence LLDVNVLIAL…DAALADSASA (130 aa). Positions 6 and 106 each coordinate Mg(2+).

It belongs to the PINc/VapC protein family. Requires Mg(2+) as cofactor.

Toxic component of a type II toxin-antitoxin (TA) system. An RNase. Its toxic effect is neutralized by coexpression with cognate antitoxin VapB39. The protein is Ribonuclease VapC39 of Mycobacterium tuberculosis (strain CDC 1551 / Oshkosh).